The primary structure comprises 1009 residues: Translation initiation factor IF-2 (1009 aa).

The interval 1-415 (MSDENENGRP…EREKEKRRGG (415 aa)) is disordered. Basic and acidic residues predominate over residues 94–110 (EELRARQRVVDAAREAQ). Residues 111 to 121 (ARQVAEQAAAE) are compositionally biased toward low complexity. Basic and acidic residues predominate over residues 122–136 (ARARAAQEAAQREAA). Residues 137 to 146 (AKAAAERAAA) show a composition bias toward low complexity. Positions 147–174 (APPPVAQAPAAPAPAAPVTPPPAAPQAP) are enriched in pro residues. Over residues 175 to 189 (RPVAQAPVAPSAPRQ) the composition is skewed to low complexity. 2 stretches are compositionally biased toward basic and acidic residues: residues 208-218 (EPSRDRRDDRP) and 251-287 (PRPEGDRPRGPRPDGDRPQGDRGGYRGDRPQGDRPQG). Positions 311–320 (GGPPRGPRPG) are enriched in pro residues. 2 stretches are compositionally biased toward basic and acidic residues: residues 346-358 (MDRRPDEDDDRRK) and 403-415 (RAREREKEKRRGG). Residues 505–675 (LRPPVVTIMG…LLQAEVLDLK (171 aa)) enclose the tr-type G domain. The segment at 514–521 (GHVDHGKT) is G1. A GTP-binding site is contributed by 514 to 521 (GHVDHGKT). The interval 539–543 (GITQH) is G2. The segment at 561 to 564 (DTPG) is G3. GTP contacts are provided by residues 561–565 (DTPGH) and 615–618 (NKMD). A G4 region spans residues 615–618 (NKMD). The interval 651–653 (SAK) is G5.

This sequence belongs to the TRAFAC class translation factor GTPase superfamily. Classic translation factor GTPase family. IF-2 subfamily.

The protein localises to the cytoplasm. Its function is as follows. One of the essential components for the initiation of protein synthesis. Protects formylmethionyl-tRNA from spontaneous hydrolysis and promotes its binding to the 30S ribosomal subunits. Also involved in the hydrolysis of GTP during the formation of the 70S ribosomal complex. The polypeptide is Translation initiation factor IF-2 (Caulobacter vibrioides (strain ATCC 19089 / CIP 103742 / CB 15) (Caulobacter crescentus)).